The chain runs to 999 residues: Probable basic-leucine zipper transcription factor N (999 aa).

Low complexity-rich tracts occupy residues 1–79 and 88–126; these read MYQS…YQQQ and NNVN…INNN. The segment at 1–126 is disordered; the sequence is MYQSIPQQGN…NNNNGNINNN (126 aa). Coiled coils occupy residues 148 to 198 and 232 to 282; these read QQQQ…MVLM and GIQQ…QQIS. A compositionally biased stretch (polar residues) spans 286–302; that stretch reads ESASPYYSTPIQSNTML. Disordered regions lie at residues 286–406, 450–533, and 601–620; these read ESAS…SQDQ, QQLH…PTIN, and EKQK…NYRQ. A compositionally biased stretch (low complexity) spans 303-347; that stretch reads SIPSSPGIPSSIPQLNNSNNINNNSNNNNNNNNNNNNNNINYNSN. Residues 348–406 are compositionally biased toward polar residues; sequence MASNFISQHSNNGSNTSSPVPQTTYLQNSGGNFNAYNGSNTNSPITPSSYLQPTTSQDQ. The stretch at 423 to 451 forms a coiled coil; it reads IQQQQKILQQQQQQQLLLQQQIQQQQQQQ. Positions 450–517 are enriched in low complexity; that stretch reads QQLHQPQSPQ…IIQPTTIQPQ (68 aa). The bZIP domain maps to 601 to 664; that stretch reads EKQKTRRRAS…KKLLHENNIL (64 aa). A basic motif region spans residues 602–632; that stretch reads KQKTRRRASQNLASRNYRQRKKQYVNEVEDR. The leucine-zipper stretch occupies residues 636 to 643; it reads IVQENERL. 3 disordered regions span residues 665–711, 779–807, and 870–899; these read KSGG…VVET, QSCP…SPYE, and VNNG…TTTT. Positions 682-692 are enriched in acidic residues; sequence SEDEDEDDFDQ. The stretch at 921 to 950 forms a coiled coil; sequence HLVQLSGLLDKLKENIDHENETLIQTYEKL.

Belongs to the bZIP family.

Its subcellular location is the nucleus. Its function is as follows. Probable transcriptional regulator. The sequence is that of Probable basic-leucine zipper transcription factor N (bzpN) from Dictyostelium discoideum (Social amoeba).